The following is a 338-amino-acid chain: D-erythrose-4-phosphate dehydrogenase (338 aa).

12–13 (RI) is an NAD(+) binding site. Residues 154–156 (SCT), arginine 200, 213–214 (TK), and arginine 236 contribute to the substrate site. The active-site Nucleophile is cysteine 155. Asparagine 318 serves as a coordination point for NAD(+).

The protein belongs to the glyceraldehyde-3-phosphate dehydrogenase family. Epd subfamily. Homotetramer.

The protein resides in the cytoplasm. The enzyme catalyses D-erythrose 4-phosphate + NAD(+) + H2O = 4-phospho-D-erythronate + NADH + 2 H(+). Its pathway is cofactor biosynthesis; pyridoxine 5'-phosphate biosynthesis; pyridoxine 5'-phosphate from D-erythrose 4-phosphate: step 1/5. In terms of biological role, catalyzes the NAD-dependent conversion of D-erythrose 4-phosphate to 4-phosphoerythronate. The sequence is that of D-erythrose-4-phosphate dehydrogenase from Pectobacterium carotovorum subsp. carotovorum (strain PC1).